Consider the following 177-residue polypeptide: Bifunctional protein PyrR (177 aa).

The PRPP-binding motif lies at 99 to 111 (VVLVDDVLYTGRT).

The protein belongs to the purine/pyrimidine phosphoribosyltransferase family. PyrR subfamily.

The enzyme catalyses UMP + diphosphate = 5-phospho-alpha-D-ribose 1-diphosphate + uracil. In terms of biological role, regulates the transcription of the pyrimidine nucleotide (pyr) operon in response to exogenous pyrimidines. Functionally, also displays a weak uracil phosphoribosyltransferase activity which is not physiologically significant. In Akkermansia muciniphila (strain ATCC BAA-835 / DSM 22959 / JCM 33894 / BCRC 81048 / CCUG 64013 / CIP 107961 / Muc), this protein is Bifunctional protein PyrR.